We begin with the raw amino-acid sequence, 126 residues long: Protein chibby homolog 1 (126 aa).

Residues 1 to 10 (MPFFGNTFSP) show a composition bias toward polar residues. The segment at 1-26 (MPFFGNTFSPKKTPPRKSASLSNLHS) is disordered. Residues S9 and S20 each carry the phosphoserine modification. A minimal region for the interaction with PKD2 region spans residues 60 to 112 (IAETGVSGGVDRREVQRLRRRNQQLEEENNLLRLKVDILLDMLSESTAESHLM). Residues 67-125 (GGVDRREVQRLRRRNQQLEEENNLLRLKVDILLDMLSESTAESHLMEKELDELRISRKR) are a coiled coil. Residues 77–98 (LRRRNQQLEEENNLLRLKVDIL) form a leucine-zipper; mediates homodimerization region.

It belongs to the chibby family. Homodimer. Homodimerization is essential for nuclear localization and interaction with KPNA4 but is dispensable for interaction with CTNNB1. Interacts with polycystin-2/PKD2 and GM130. Interacts with the C-terminal region of CTNNB1. Interacts (C-terminus) with TCIM (C-terminus), TCIM competes with CTNNB1 for the interaction with CBY1. Interacts with FAM92A; this interaction facilitates targeting of FAM92A to cilium basal body. Interacts with CIBAR2. Interacts with KPNA4. In terms of tissue distribution, widely expressed. Expressed at higher levels in heart, skeletal muscle, kidney and placenta. Also found in brain, lung, liver and testis. Significantly down-regulated in thyroid and metastatic uterine tumors.

It localises to the nucleus speckle. It is found in the cytoplasm. The protein localises to the cytoskeleton. Its subcellular location is the cilium basal body. The protein resides in the microtubule organizing center. It localises to the centrosome. It is found in the centriole. The protein localises to the golgi apparatus. Its subcellular location is the trans-Golgi network. The protein resides in the cell projection. It localises to the cilium. It is found in the flagellum. The protein localises to the nucleus. In terms of biological role, inhibits the Wnt/Wingless pathway by binding to CTNNB1/beta-catenin and inhibiting beta-catenin-mediated transcriptional activation through competition with TCF/LEF transcription factors. Has also been shown to play a role in regulating the intracellular trafficking of polycystin-2/PKD2 and possibly of other intracellular proteins. Promotes adipocyte and cardiomyocyte differentiation. The chain is Protein chibby homolog 1 (CBY1) from Homo sapiens (Human).